We begin with the raw amino-acid sequence, 473 residues long: Probable dipeptidase (473 aa).

C10 is an active-site residue.

It belongs to the peptidase C69 family.

It carries out the reaction an L-aminoacyl-L-amino acid + H2O = 2 an L-alpha-amino acid. The chain is Probable dipeptidase from Latilactobacillus sakei (Lactobacillus sakei).